Consider the following 260-residue polypeptide: 14-3-3 protein 3 (260 aa).

The protein belongs to the 14-3-3 family. Homodimer.

This is 14-3-3 protein 3 (TFT3) from Solanum lycopersicum (Tomato).